A 343-amino-acid chain; its full sequence is MNIMRTTMLLAFMTALFMGVGYLVGGGSGMVVALFIAGGLNFFSYWNSDKIVLRMYGAREVDEHSSPVYYRIVTKLAQRASLPQPKVYIINNAQPNAFATGRDPQNAAVAASTGLLKQLSAEEISGVMAHELAHIEHRDTLTMTLTATIAGAISMLGNFALLMGMGRQRNSSGNSQGAGMLGTVIALFVAPFAAMLVQMAISRTREYAADRRGAEICGNPLWLASALSKISGGGQTFYNEEAEHNPATAHMFIVNPLRGEGADSLFSTHPATENRIAALHKQAEKMAKEGNKGTKFAVENGLYRKHGNLEDEDLNPEAQNGFTHNQKKKTVRRGKDRPTWLRH.

2 helical membrane passes run 7–24 (TMLL…GYLV) and 29–46 (GMVV…FSYW). His130 provides a ligand contact to Zn(2+). Glu131 is an active-site residue. Position 134 (His134) interacts with Zn(2+). 2 consecutive transmembrane segments (helical) span residues 145-165 (LTAT…LMGM) and 177-197 (GAGM…AMLV). Glu206 is a binding site for Zn(2+). The interval 308 to 343 (NLEDEDLNPEAQNGFTHNQKKKTVRRGKDRPTWLRH) is disordered. Positions 325 to 335 (NQKKKTVRRGK) are enriched in basic residues.

This sequence belongs to the peptidase M48B family. Zn(2+) serves as cofactor.

The protein resides in the cell inner membrane. This Bartonella bacilliformis (strain ATCC 35685 / KC583 / Herrer 020/F12,63) protein is Protease HtpX homolog.